Reading from the N-terminus, the 261-residue chain is Cytochrome c oxidase subunit 3 (261 aa).

Topologically, residues 1-15 (MTHQTHAYHMVNPSP) are mitochondrial matrix. Residues 16–34 (WPLTGALSALLMTSGLIMW) form a helical membrane-spanning segment. Residues 35–40 (FHYNSM) are Mitochondrial intermembrane-facing. A helical transmembrane segment spans residues 41–66 (SLLTLGFTTNLLTMYQWWRDVIREGT). Topologically, residues 67-72 (FQGHHT) are mitochondrial matrix. Residues 73–105 (PIVQKGLRYGMVLFIVSEVFFFAGFFWAFYHSS) traverse the membrane as a helical segment. The Mitochondrial intermembrane segment spans residues 106 to 128 (LAPTPELGGCWPPTGIIPLNPLE). A helical transmembrane segment spans residues 129–152 (VPLLNTSVLLASGVSITWAHHSLM). The Mitochondrial matrix segment spans residues 153-155 (EGN). The helical transmembrane segment at 156–183 (RKHMLQALFITISLGVYFTLLQASEYYE) threads the bilayer. The Mitochondrial intermembrane portion of the chain corresponds to 184-190 (TSFTISD). The helical transmembrane segment at 191–223 (GVYGSTFFMATGFHGLHVIIGSTFLIVCFLRQL) threads the bilayer. Residues 224–232 (YYHFTSNHH) are Mitochondrial matrix-facing. A helical transmembrane segment spans residues 233 to 256 (FGFEAAAWYWHFVDVVWLFLYVSI). At 257–261 (YWWGS) the chain is on the mitochondrial intermembrane side.

The protein belongs to the cytochrome c oxidase subunit 3 family. As to quaternary structure, component of the cytochrome c oxidase (complex IV, CIV), a multisubunit enzyme composed of 14 subunits. The complex is composed of a catalytic core of 3 subunits MT-CO1, MT-CO2 and MT-CO3, encoded in the mitochondrial DNA, and 11 supernumerary subunits COX4I, COX5A, COX5B, COX6A, COX6B, COX6C, COX7A, COX7B, COX7C, COX8 and NDUFA4, which are encoded in the nuclear genome. The complex exists as a monomer or a dimer and forms supercomplexes (SCs) in the inner mitochondrial membrane with NADH-ubiquinone oxidoreductase (complex I, CI) and ubiquinol-cytochrome c oxidoreductase (cytochrome b-c1 complex, complex III, CIII), resulting in different assemblies (supercomplex SCI(1)III(2)IV(1) and megacomplex MCI(2)III(2)IV(2)).

Its subcellular location is the mitochondrion inner membrane. It carries out the reaction 4 Fe(II)-[cytochrome c] + O2 + 8 H(+)(in) = 4 Fe(III)-[cytochrome c] + 2 H2O + 4 H(+)(out). Component of the cytochrome c oxidase, the last enzyme in the mitochondrial electron transport chain which drives oxidative phosphorylation. The respiratory chain contains 3 multisubunit complexes succinate dehydrogenase (complex II, CII), ubiquinol-cytochrome c oxidoreductase (cytochrome b-c1 complex, complex III, CIII) and cytochrome c oxidase (complex IV, CIV), that cooperate to transfer electrons derived from NADH and succinate to molecular oxygen, creating an electrochemical gradient over the inner membrane that drives transmembrane transport and the ATP synthase. Cytochrome c oxidase is the component of the respiratory chain that catalyzes the reduction of oxygen to water. Electrons originating from reduced cytochrome c in the intermembrane space (IMS) are transferred via the dinuclear copper A center (CU(A)) of subunit 2 and heme A of subunit 1 to the active site in subunit 1, a binuclear center (BNC) formed by heme A3 and copper B (CU(B)). The BNC reduces molecular oxygen to 2 water molecules using 4 electrons from cytochrome c in the IMS and 4 protons from the mitochondrial matrix. The polypeptide is Cytochrome c oxidase subunit 3 (MT-CO3) (Canis lupus (Gray wolf)).